A 274-amino-acid chain; its full sequence is Dermonecrotic toxin LspiSicTox-betaIII2 (274 aa).

Residue His5 is part of the active site. Glu25 and Asp27 together coordinate Mg(2+). The active-site Nucleophile is the His41. 2 disulfides stabilise this stretch: Cys45–Cys51 and Cys47–Cys189. Asp85 is a binding site for Mg(2+).

The protein belongs to the arthropod phospholipase D family. Class II subfamily. It depends on Mg(2+) as a cofactor. As to expression, expressed by the venom gland.

The protein resides in the secreted. It catalyses the reaction an N-(acyl)-sphingosylphosphocholine = an N-(acyl)-sphingosyl-1,3-cyclic phosphate + choline. The enzyme catalyses an N-(acyl)-sphingosylphosphoethanolamine = an N-(acyl)-sphingosyl-1,3-cyclic phosphate + ethanolamine. It carries out the reaction a 1-acyl-sn-glycero-3-phosphocholine = a 1-acyl-sn-glycero-2,3-cyclic phosphate + choline. The catalysed reaction is a 1-acyl-sn-glycero-3-phosphoethanolamine = a 1-acyl-sn-glycero-2,3-cyclic phosphate + ethanolamine. Dermonecrotic toxins cleave the phosphodiester linkage between the phosphate and headgroup of certain phospholipids (sphingolipid and lysolipid substrates), forming an alcohol (often choline) and a cyclic phosphate. This toxin acts on sphingomyelin (SM). It may also act on ceramide phosphoethanolamine (CPE), lysophosphatidylcholine (LPC) and lysophosphatidylethanolamine (LPE), but not on lysophosphatidylserine (LPS), and lysophosphatidylglycerol (LPG). It acts by transphosphatidylation, releasing exclusively cyclic phosphate products as second products. Induces dermonecrosis, hemolysis, increased vascular permeability, edema, inflammatory response, and platelet aggregation. This is Dermonecrotic toxin LspiSicTox-betaIII2 from Loxosceles spinulosa (Recluse spider).